A 963-amino-acid polypeptide reads, in one-letter code: Importin-13 (963 aa).

20 HEAT repeats span residues 24 to 54 (ENVEKALHQLYYDPNIENKNLAQKWLMQAQV), 56 to 88 (PQAWHFSWQLLQPDKVPEIQYFGASALHIKISR), 95 to 135 (TDQY…LSMM), 142 to 179 (AVADMVRLFQAEDSPVDSQGRCLALLELLTVLPEEFQT), 194 to 231 (LAVECGAVFPLLEQLLQQPSSPSCVRQKVLKCFSSWVQ), 236 to 268 (LQDCEALIQAAFAALQDSELFDSSVEAIVNAIS), 276 to 325 (VNTL…ALLD), 330 to 372 (WQSF…DDIL), 375 to 438 (EAEK…YEML), 440 to 476 (AELLSNLYDKLGRLLTSSEEPYSWQHTEALLYGFQSI), 487 to 522 (VVPGLIGLIPRISISNVQLADTVMFTIGALSEWLAD), 524 to 558 (PVMINSVLPLVLHALGNPELSVSSVSTLKKICREC), 562 to 600 (LPPYAANIVAVSQDVLMKQIHKTSQCMWLMQALGFLLSA), 603 to 648 (VEEN…SNLF), 676 to 716 (PVVV…VKTL), 720 to 754 (FAPMVPQLCEMLGRMYSTVPQASALDLTRQLVHIF), 761 to 803 (FPPI…ALKR), 815 to 845 (VKAVFQCAVLALKFPEAPTVKASCGFFTELL), 860 to 893 (EDGRMLLIAVLEAIGGQASRSLMDCFADILFALN), and 897 to 931 (FSLLSMWIKEALQPPGFPSARLSPEQKDTFSQQIL). Residues 45-111 (AQKWLMQAQV…KAHSFTQITR (67 aa)) form the Importin N-terminal domain.

It belongs to the importin beta family. Interacts with UBC9, RAN, RBM8A, eIF-1A and PAX6. In terms of tissue distribution, expressed in fetal brain, heart, intestine and kidney.

It localises to the cytoplasm. The protein resides in the nucleus. Functionally, functions in nuclear protein import as nuclear transport receptor. Serves as receptor for nuclear localization signals (NLS) in cargo substrates. Is thought to mediate docking of the importin/substrate complex to the nuclear pore complex (NPC) through binding to nucleoporin and the complex is subsequently translocated through the pore by an energy requiring, Ran-dependent mechanism. At the nucleoplasmic side of the NPC, Ran binds to the importin, the importin/substrate complex dissociates and importin is re-exported from the nucleus to the cytoplasm where GTP hydrolysis releases Ran. The directionality of nuclear import is thought to be conferred by an asymmetric distribution of the GTP- and GDP-bound forms of Ran between the cytoplasm and nucleus. Mediates the nuclear import of UBC9, the RBM8A/MAGOH complex, PAX6 and probably other members of the paired homeobox family. Also mediates nuclear export of eIF-1A, and the cytoplasmic release of eIF-1A is triggered by the loading of import substrates onto IPO13. The polypeptide is Importin-13 (Ipo13) (Rattus norvegicus (Rat)).